Consider the following 541-residue polypeptide: MAAVNLQASCSSGLASEDDANVGSQIGAAERLERPPRRQQQRNNYGSSNQDQPDAAILAVPNVVMREPCGSRPSRLTGGGGGSGGPPTNEMEEEQGLKYGAQHVIKLFVPVSLCMLVVVATINSISFYNSTDVYLLYTPFHEQSPEPSVKFWSALANSLILMSVVVVMTFLLIVLYKKRCYRIIHGWLILSSFMLLFIFTYLYLEELLRAYNIPMDYPTALLIMWNFGVVGMMSIHWQGPLRLQQGYLIFVAALMALVFIKYLPEWTAWAVLAAISIWDLIAVLSPRGPLRILVETAQERNEQIFPALIYSSTVVYALVNTVTPQQSQATASSSPSSSNSTTTTRATQNSLASPEAAAASGQRTGNSHPRQNQRDDGSVLATEGMPLVTFKSNLRGNAEAAGFTQEWSANLSERVARRQIEVQSTQSGNAQRSNEYRTVTAPDQNHPDGQEERGIKLGLGDFIFYSVLVGKASSYGDWTTTIACFVAILIGLCLTLLLLAIWRKALPALPISITFGLIFCFATSAVVKPFMEDLSAKQVFI.

Composition is skewed to polar residues over residues 1 to 14 (MAAV…SSGL) and 43 to 52 (NNYGSSNQDQ). Disordered stretches follow at residues 1 to 52 (MAAV…NQDQ) and 69 to 92 (CGSR…NEME). Residues 1 to 106 (MAAVNLQASC…LKYGAQHVIK (106 aa)) lie on the Cytoplasmic side of the membrane. The helical transmembrane segment at 107-127 (LFVPVSLCMLVVVATINSISF) threads the bilayer. The Lumenal segment spans residues 128–154 (YNSTDVYLLYTPFHEQSPEPSVKFWSA). Asparagine 129 carries N-linked (GlcNAc...) asparagine glycosylation. A helical transmembrane segment spans residues 155 to 175 (LANSLILMSVVVVMTFLLIVL). At 176–182 (YKKRCYR) the chain is on the cytoplasmic side. The chain crosses the membrane as a helical span at residues 183–203 (IIHGWLILSSFMLLFIFTYLY). The Lumenal segment spans residues 204–216 (LEELLRAYNIPMD). The helical transmembrane segment at 217 to 237 (YPTALLIMWNFGVVGMMSIHW) threads the bilayer. Residues 238–242 (QGPLR) are Cytoplasmic-facing. The helical transmembrane segment at 243 to 263 (LQQGYLIFVAALMALVFIKYL) threads the bilayer. Residues 264–265 (PE) are Lumenal-facing. A helical membrane pass occupies residues 266-286 (WTAWAVLAAISIWDLIAVLSP). Aspartate 279 is a catalytic residue. At 287–453 (RGPLRILVET…QNHPDGQEER (167 aa)) the chain is on the cytoplasmic side. An interaction with Mettl2 region spans residues 320–481 (NTVTPQQSQA…ASSYGDWTTT (162 aa)). Residues 327–350 (SQATASSSPSSSNSTTTTRATQNS) are compositionally biased toward low complexity. Disordered regions lie at residues 327 to 379 (SQAT…DGSV) and 421 to 449 (EVQS…HPDG). Polar residues-rich tracts occupy residues 361–370 (GQRTGNSHPR) and 421–443 (EVQS…TAPD). A helical membrane pass occupies residues 454–474 (GIKLGLGDFIFYSVLVGKASS). Aspartate 461 is a catalytic residue. Topologically, residues 475 to 481 (YGDWTTT) are lumenal. A helical transmembrane segment spans residues 482–502 (IACFVAILIGLCLTLLLLAIW). Residues 503 to 506 (RKAL) are Cytoplasmic-facing. Positions 507 to 509 (PAL) match the PAL motif. The segment at residues 507 to 527 (PALPISITFGLIFCFATSAVV) is an intramembrane region (helical). Over 528–541 (KPFMEDLSAKQVFI) the chain is Cytoplasmic.

It belongs to the peptidase A22A family. In terms of assembly, homodimer. Component of the gamma-secretase complex, a complex composed of a presenilin (Psn) homodimer, nicastrin (Nct), Aph-1 and Pen-2. Interacts with Mettl2. Isoform 2 shows a better interaction with Mettl2 than isoform 1. Post-translationally, cleaved. The cleavage, which probably takes place between the 6th and the 7th transmembrane regions, may be required for activation of the gamma-secretase activity. In terms of tissue distribution, maternally expressed in nurse and follicle cells. In early embryos, expressed in all or most cells and later increases in CNS and epidermal tissues. In larvae, expression is seen in all imaginal disks, brain and optic lobes. In pupae, expression is seen in eye disk and brain.

It localises to the endoplasmic reticulum membrane. Its subcellular location is the golgi apparatus membrane. Functionally, probable catalytic subunit of the gamma-secretase complex, an endoprotease complex that catalyzes the intramembrane cleavage of integral membrane proteins such as Notch receptor. Required for S3 cleavage of Notch, which releases activated Notch protein from the cell membrane. Involved in the patterning of the optic lobes. This chain is Presenilin homolog (Psn), found in Drosophila melanogaster (Fruit fly).